Here is a 583-residue protein sequence, read N- to C-terminus: uncharacterized protein (583 aa).

This is an uncharacterized protein from Acanthamoeba polyphaga (Amoeba).